Reading from the N-terminus, the 244-residue chain is Probable Ni/Fe-hydrogenase B-type cytochrome subunit (244 aa).

4 consecutive transmembrane segments (helical) span residues 39–59 (LWHWVNALAIVVLAVTGFFIG), 73–93 (FLMGYIRFAHFVAAYIFAIGM), 150–171 (FAMFFIFFLSSVFMILTGFAMY), and 204–221 (LGMWFIVVFVIVHVYAAI).

Belongs to the HupC/HyaC/HydC family.

It localises to the cell membrane. In terms of biological role, probable b-type cytochrome. The polypeptide is Probable Ni/Fe-hydrogenase B-type cytochrome subunit (hoxZ) (Cupriavidus necator (strain ATCC 17699 / DSM 428 / KCTC 22496 / NCIMB 10442 / H16 / Stanier 337) (Ralstonia eutropha)).